The chain runs to 876 residues: Alanine--tRNA ligase (876 aa).

The residue at position 74 (K74) is an N6-acetyllysine. Positions 564, 568, 666, and 670 each coordinate Zn(2+).

It belongs to the class-II aminoacyl-tRNA synthetase family. Homotetramer. Zn(2+) serves as cofactor.

It is found in the cytoplasm. It catalyses the reaction tRNA(Ala) + L-alanine + ATP = L-alanyl-tRNA(Ala) + AMP + diphosphate. In terms of biological role, catalyzes the attachment of alanine to tRNA(Ala) in a two-step reaction: alanine is first activated by ATP to form Ala-AMP and then transferred to the acceptor end of tRNA(Ala). Also edits incorrectly charged Ser-tRNA(Ala) and Gly-tRNA(Ala) via its editing domain. This is Alanine--tRNA ligase from Shigella sonnei (strain Ss046).